The chain runs to 520 residues: Peptide chain release factor 3 (520 aa).

Residues 8-277 form the tr-type G domain; that stretch reads ESRKTFAIIS…HAPMPNARQT (270 aa). GTP is bound by residues 17 to 24, 85 to 89, and 139 to 142; these read SHPDAGKT, DTPGH, and NKLD.

The protein belongs to the TRAFAC class translation factor GTPase superfamily. Classic translation factor GTPase family. PrfC subfamily.

It localises to the cytoplasm. Increases the formation of ribosomal termination complexes and stimulates activities of RF-1 and RF-2. It binds guanine nucleotides and has strong preference for UGA stop codons. It may interact directly with the ribosome. The stimulation of RF-1 and RF-2 is significantly reduced by GTP and GDP, but not by GMP. This is Peptide chain release factor 3 from Staphylococcus epidermidis (strain ATCC 35984 / DSM 28319 / BCRC 17069 / CCUG 31568 / BM 3577 / RP62A).